The following is a 681-amino-acid chain: MASSFARDGSPSRGRSTSPRPRIPEESLEASLMDGLPDTRQLQAFGRKVTATAGSLIGTEGVGQHYQNALGELHRELRRPMLQRSVFSFAQTTPREIVRSRISVPEIQQRALAYVPDDMLANIPEDNNEFSLFQGFQATLPDEPETIKKKGKTHNARGQRLIGGELEDDEYSKLPPSMQRLQKQKHSMSHQLEMMGVRKHMCVAEIHEIDNKIANLNTMRKMVLDRLAGLEIQEEELAQDLLGVDNEIEDLQEELDDAAALAPPKEDSRPTTSGSEAVSETFMSESIYQKISPKSKNRGKKPIRRPSMRVLHEHLESGSKIKELPAHNDSITAMDFDAPWGTLVTASLDDTVRVWDLNAGRCIGMLEGHLSSVRCLQVEESIVATGSMDATIRLWDLSRAEYAPQDNRVNKRGGEGEGEGDGDAQEDEDGLAFENSSDAPPAPPPTIMQDVPLFTLESHVDEITAIHFKGDTLVSGSADKTLRQWDLVKGRCVQTLDVLWAAAQATATNNASSEWRPTGRSMDASADFVGAIQVFDAALACGTADGMVRLWDLRSGQVHRSLVGHTGPVTALQFDDVHLVTGSADRSIRIWDLRTGSIYDAYAYDNPVTSMMFDSRRIVSAAGESVVKVYDKTDGRHWNCGPGVGADEDDNTSHAMIERVRIKDGYLVEGRRDGTVGVWSC.

Disordered regions lie at residues 1–25 (MASS…RIPE), 146–171 (TIKK…DDEY), and 259–279 (AALA…EAVS). A compositionally biased stretch (low complexity) spans 11–20 (PSRGRSTSPR). The stretch at 211-263 (NKIANLNTMRKMVLDRLAGLEIQEEELAQDLLGVDNEIEDLQEELDDAAALAP) forms a coiled coil. The segment covering 270–279 (PTTSGSEAVS) has biased composition (polar residues). 2 WD repeats span residues 326–367 (AHND…GMLE) and 369–405 (HLSS…YAPQ). A disordered region spans residues 406 to 449 (DNRVNKRGGEGEGEGDGDAQEDEDGLAFENSSDAPPAPPPTIMQ). The segment covering 416–431 (GEGEGDGDAQEDEDGL) has biased composition (acidic residues). WD repeat units lie at residues 458 to 497 (SHVD…QTLD), 505 to 561 (ATAT…VHRS), 564 to 603 (GHTG…DAYA), 605 to 640 (DNPV…HWNC), and 647 to 681 (DEDD…VWSC).

The protein belongs to the WD repeat MDV1/CAF4 family.

The protein resides in the mitochondrion outer membrane. Functionally, involved in mitochondrial fission. Acts as an adapter protein required to form mitochondrial fission complexes. Formation of these complexes is required to promote constriction and fission of the mitochondrial compartment at a late step in mitochondrial division. The protein is Mitochondrial division protein 1 (MDV1) of Phaeosphaeria nodorum (strain SN15 / ATCC MYA-4574 / FGSC 10173) (Glume blotch fungus).